The following is a 618-amino-acid chain: MISGHDFYTVMAAVVPLYVAMFLAYGSVRWWGIFTPDQCSGINRFVAIFAVPLLSFHFISTNDPYAMNLRFLAADTLQKLLVLAGLAAWSRLPSRTGAPRLDWSITLFSLSTLPNTLVMGIPLLIAMYGPYSGSLMVQIVVLQCIIWYTLMLFLFEFRAARMLIADQFPDTAASIVSLHVDPDVVSLEGGHAETEAEVAADGRLHVTVRRSSVSRRSLLVTPRPSNLTGAEIYSLSSSRNPTPRGSNFNHADFFAMVGGGPPPPTPAAVRGSSFGASELYSLQSSRGPTPRQSNFDEHSARPPKPPATTTGALNHDAKELHMFVWSSSASPVSEVSGLPVFSGGGGGGALDVGAKEIHMVIPADLPQNNGSGKEHEEYGAVALGGGGGGENFSFGGGKTVDGAEAVDEEAALPDGLTKMGSSSTAELHPKVVDVDGPNAGGGAAGAGQYQMPPASVMTRLILIMVWRKLIRNPNTYSSLLGLAWSLVAFRWHVSMPAIVEKSISILSDAGLGMAMFSLGLFMALQPSIIACGKSAAVVSMAVRFLAGPAVMAAASIAIGLRGTLLHVAIVQAALPQGIVPFVFAKEYNVHPAILSTAVIFGMLIALPITLLYYILLGL.

The Extracellular segment spans residues M1–D6. The chain crosses the membrane as a helical span at residues F7 to S27. Residues V28–Q38 lie on the Cytoplasmic side of the membrane. A helical transmembrane segment spans residues C39–I59. V51 contacts (indol-3-yl)acetate. The Extracellular portion of the chain corresponds to S60–R70. A helical membrane pass occupies residues F71–S90. Residues R91–S104 lie on the Cytoplasmic side of the membrane. Residues I105–I125 traverse the membrane as a helical segment. Residues N115 and L117 each contribute to the (indol-3-yl)acetate site. At A126 to S134 the chain is on the extracellular side. A helical membrane pass occupies residues L135 to F155. Y148 contributes to the (indol-3-yl)acetate binding site. Residues E156–S478 are Cytoplasmic-facing. A compositionally biased stretch (polar residues) spans S281–S293. The interval S281 to A312 is disordered. Residues L479–V499 form a helical membrane-spanning segment. At E500–S502 the chain is on the extracellular side. A helical transmembrane segment spans residues I503–A523. Residues L524–S539 lie on the Cytoplasmic side of the membrane. The helical transmembrane segment at M540 to L560 threads the bilayer. Topologically, residues R561–T563 are extracellular. A helical transmembrane segment spans residues L564–A584. I578 and V579 together coordinate (indol-3-yl)acetate. At K585–A597 the chain is on the cytoplasmic side. Residues V598–L618 traverse the membrane as a helical segment.

The protein belongs to the auxin efflux carrier (TC 2.A.69.1) family. Homodimer. Expressed in coleoptiles, roots, vascular bundles of leaves, shoots, lamina joints and vascular bundles of the lemma and filament. Expressed in stem bases, stems, leaves and young panicles.

It localises to the cell membrane. Its function is as follows. Acts as a component of the auxin efflux carrier. Involved in the polar auxin transport which may regulate crown root development and response to water stress. This is Auxin efflux carrier component 3a from Oryza sativa subsp. japonica (Rice).